The following is a 431-amino-acid chain: Adenylosuccinate lyase (431 aa).

N(6)-(1,2-dicarboxyethyl)-AMP-binding positions include 4 to 5, 67 to 69, and 93 to 94; these read RY, RHD, and TS. His-141 (proton donor/acceptor) is an active-site residue. Gln-212 is a binding site for N(6)-(1,2-dicarboxyethyl)-AMP. Ser-262 functions as the Proton donor/acceptor in the catalytic mechanism. N(6)-(1,2-dicarboxyethyl)-AMP is bound by residues Ser-263, 268–270, Asn-276, and 307–311; these read KRN and SAERI.

Belongs to the lyase 1 family. Adenylosuccinate lyase subfamily. Homotetramer. Residues from neighboring subunits contribute catalytic and substrate-binding residues to each active site.

It catalyses the reaction N(6)-(1,2-dicarboxyethyl)-AMP = fumarate + AMP. The enzyme catalyses (2S)-2-[5-amino-1-(5-phospho-beta-D-ribosyl)imidazole-4-carboxamido]succinate = 5-amino-1-(5-phospho-beta-D-ribosyl)imidazole-4-carboxamide + fumarate. The protein operates within purine metabolism; AMP biosynthesis via de novo pathway; AMP from IMP: step 2/2. It functions in the pathway purine metabolism; IMP biosynthesis via de novo pathway; 5-amino-1-(5-phospho-D-ribosyl)imidazole-4-carboxamide from 5-amino-1-(5-phospho-D-ribosyl)imidazole-4-carboxylate: step 2/2. Functionally, catalyzes two reactions in de novo purine nucleotide biosynthesis. Catalyzes the breakdown of 5-aminoimidazole- (N-succinylocarboxamide) ribotide (SAICAR or 2-[5-amino-1-(5-phospho-beta-D-ribosyl)imidazole-4-carboxamido]succinate) to 5-aminoimidazole-4-carboxamide ribotide (AICAR or 5-amino-1-(5-phospho-beta-D-ribosyl)imidazole-4-carboxamide) and fumarate, and of adenylosuccinate (ADS or N(6)-(1,2-dicarboxyethyl)-AMP) to adenosine monophosphate (AMP) and fumarate. Influences the affinity of glutamyl--tRNA ligase for its substrates and increases its thermostability. The sequence is that of Adenylosuccinate lyase (purB) from Bacillus subtilis (strain 168).